A 329-amino-acid polypeptide reads, in one-letter code: MELHILEHRLKVASIAKENIQLFTYGLIKLAFLSSKTRCKFFSLTETPEDYTIIVDEEGFLELPSSEHLSVADATWLALNVVSGGGSSSSSQPIGVTKIAKSVIAPLADQNISVFMLSTYQTDFILVRERDLPFVMHTLAAEFTILQVVNGETVAADNLGVTNGFVKPKLVQRPVIHPLSSPSNMFCVTSLDPYTLPTVTTLLMDVMFYSNGVKDSVVGSEEPGHIRFFSFSLIEGYISLVMDVQTQQRFPSNLLFTSASGELWKMVRIGGQPLGFDECGIVAQISEPLAAADIPAYYISTFKFDHALVPEENINGVINALQVSQAEKH.

ACT domains lie at 72–139 and 262–322; these read ADAT…MHTL and ELWK…NALQ.

The protein belongs to the GATS family. In terms of assembly, may form homodimers and heterodimers.

The protein resides in the cytoplasm. The protein localises to the cytosol. Functionally, functions as a negative regulator of the TORC1 signaling pathway. In Xenopus tropicalis (Western clawed frog), this protein is Cytosolic arginine sensor for mTORC1 subunit 2.